The sequence spans 462 residues: Hydroxymethylglutaryl-CoA synthase (462 aa).

The active-site Proton donor/acceptor is the Glu-92. Cys-124 serves as the catalytic Acyl-thioester intermediate. Residues Cys-124, Thr-167, Ser-219, His-257, Lys-266, Asn-327, and Ser-360 each contribute to the (3S)-3-hydroxy-3-methylglutaryl-CoA site. The active-site Proton donor/acceptor is His-257. Lys-408 participates in a covalent cross-link: Glycyl lysine isopeptide (Lys-Gly) (interchain with G-Cter in SUMO).

It belongs to the thiolase-like superfamily. HMG-CoA synthase family. Post-translationally, ubiquitinated.

The catalysed reaction is acetoacetyl-CoA + acetyl-CoA + H2O = (3S)-3-hydroxy-3-methylglutaryl-CoA + CoA + H(+). The protein operates within metabolic intermediate biosynthesis; (R)-mevalonate biosynthesis; (R)-mevalonate from acetyl-CoA: step 2/3. Its function is as follows. This enzyme condenses acetyl-CoA with acetoacetyl-CoA to form HMG-CoA, which is the substrate for HMG-CoA reductase. The protein is Hydroxymethylglutaryl-CoA synthase of Caenorhabditis elegans.